The primary structure comprises 250 residues: uncharacterized protein (250 aa).

A helical membrane pass occupies residues 2–22; it reads ILRIIIFVIIILVVSLLLIYF.

The protein resides in the membrane. This is an uncharacterized protein from Acanthamoeba polyphaga (Amoeba).